A 234-amino-acid polypeptide reads, in one-letter code: Leucyl/phenylalanyl-tRNA--protein transferase (234 aa).

The protein belongs to the L/F-transferase family.

It localises to the cytoplasm. The enzyme catalyses N-terminal L-lysyl-[protein] + L-leucyl-tRNA(Leu) = N-terminal L-leucyl-L-lysyl-[protein] + tRNA(Leu) + H(+). It carries out the reaction N-terminal L-arginyl-[protein] + L-leucyl-tRNA(Leu) = N-terminal L-leucyl-L-arginyl-[protein] + tRNA(Leu) + H(+). The catalysed reaction is L-phenylalanyl-tRNA(Phe) + an N-terminal L-alpha-aminoacyl-[protein] = an N-terminal L-phenylalanyl-L-alpha-aminoacyl-[protein] + tRNA(Phe). Functionally, functions in the N-end rule pathway of protein degradation where it conjugates Leu, Phe and, less efficiently, Met from aminoacyl-tRNAs to the N-termini of proteins containing an N-terminal arginine or lysine. This Nitrosomonas eutropha (strain DSM 101675 / C91 / Nm57) protein is Leucyl/phenylalanyl-tRNA--protein transferase.